The following is a 150-amino-acid chain: SsrA-binding protein (150 aa).

Belongs to the SmpB family.

It is found in the cytoplasm. Required for rescue of stalled ribosomes mediated by trans-translation. Binds to transfer-messenger RNA (tmRNA), required for stable association of tmRNA with ribosomes. tmRNA and SmpB together mimic tRNA shape, replacing the anticodon stem-loop with SmpB. tmRNA is encoded by the ssrA gene; the 2 termini fold to resemble tRNA(Ala) and it encodes a 'tag peptide', a short internal open reading frame. During trans-translation Ala-aminoacylated tmRNA acts like a tRNA, entering the A-site of stalled ribosomes, displacing the stalled mRNA. The ribosome then switches to translate the ORF on the tmRNA; the nascent peptide is terminated with the 'tag peptide' encoded by the tmRNA and targeted for degradation. The ribosome is freed to recommence translation, which seems to be the essential function of trans-translation. The sequence is that of SsrA-binding protein from Chlamydia caviae (strain ATCC VR-813 / DSM 19441 / 03DC25 / GPIC) (Chlamydophila caviae).